We begin with the raw amino-acid sequence, 158 residues long: Small ribosomal subunit protein uS9 (158 aa).

This sequence belongs to the universal ribosomal protein uS9 family.

This Rhodopseudomonas palustris (strain HaA2) protein is Small ribosomal subunit protein uS9.